We begin with the raw amino-acid sequence, 56 residues long: Small ribosomal subunit protein uS14A (56 aa).

Residues Cys-21 and Cys-24 each coordinate Zn(2+). Phosphoserine is present on Ser-25. Zn(2+) is bound by residues Cys-39 and Cys-42.

It belongs to the universal ribosomal protein uS14 family. Component of the small ribosomal subunit (SSU). Mature yeast ribosomes consist of a small (40S) and a large (60S) subunit. The 40S small subunit contains 1 molecule of ribosomal RNA (18S rRNA) and 33 different proteins (encoded by 57 genes). The large 60S subunit contains 3 rRNA molecules (25S, 5.8S and 5S rRNA) and 46 different proteins (encoded by 81 genes). It depends on Zn(2+) as a cofactor.

It localises to the cytoplasm. Component of the ribosome, a large ribonucleoprotein complex responsible for the synthesis of proteins in the cell. The small ribosomal subunit (SSU) binds messenger RNAs (mRNAs) and translates the encoded message by selecting cognate aminoacyl-transfer RNA (tRNA) molecules. The large subunit (LSU) contains the ribosomal catalytic site termed the peptidyl transferase center (PTC), which catalyzes the formation of peptide bonds, thereby polymerizing the amino acids delivered by tRNAs into a polypeptide chain. The nascent polypeptides leave the ribosome through a tunnel in the LSU and interact with protein factors that function in enzymatic processing, targeting, and the membrane insertion of nascent chains at the exit of the ribosomal tunnel. This chain is Small ribosomal subunit protein uS14A, found in Saccharomyces cerevisiae (strain ATCC 204508 / S288c) (Baker's yeast).